The primary structure comprises 163 residues: Nucleotide-binding protein DET1318 (163 aa).

The protein belongs to the YajQ family.

Its function is as follows. Nucleotide-binding protein. The chain is Nucleotide-binding protein DET1318 from Dehalococcoides mccartyi (strain ATCC BAA-2266 / KCTC 15142 / 195) (Dehalococcoides ethenogenes (strain 195)).